The following is a 139-amino-acid chain: Large-conductance mechanosensitive channel (139 aa).

Transmembrane regions (helical) follow at residues 9-29 and 79-99; these read AFAVKGNVVDMAVGIIIGAAF and IQTVIDFVIVAFAIFMGVKAI.

Belongs to the MscL family. In terms of assembly, homopentamer.

The protein resides in the cell inner membrane. Its function is as follows. Channel that opens in response to stretch forces in the membrane lipid bilayer. May participate in the regulation of osmotic pressure changes within the cell. This chain is Large-conductance mechanosensitive channel, found in Pseudomonas putida (strain GB-1).